Here is a 677-residue protein sequence, read N- to C-terminus: Sulfate transporter 2.1 (677 aa).

The Cytoplasmic segment spans residues 1 to 118; the sequence is MKERDSESFE…NYKLTMFKND (118 aa). Positions 23–54 are disordered; that stretch reads STHMIQMAMANSGSSAAAQAGQDQPDRSKWLL. The segment covering 28 to 44 has biased composition (low complexity); that stretch reads QMAMANSGSSAAAQAGQ. Residues 119–139 traverse the membrane as a helical segment; that stretch reads LMAGLTLASLCIPQSIGYATL. Residues 140–141 lie on the Extracellular side of the membrane; the sequence is AK. The helical transmembrane segment at 142-162 threads the bilayer; the sequence is LDPQYGLYTSVVPPLIYALMG. Topologically, residues 163–166 are cytoplasmic; that stretch reads TSRE. A helical transmembrane segment spans residues 167 to 187; the sequence is IAIGPVAVVSLLISSMLQKLI. Over 188–198 the chain is Extracellular; the sequence is DPETDPLGYKK. A helical transmembrane segment spans residues 199–219; the sequence is LVLTTTFFAGIFQASFGLFRL. Residues 220–221 lie on the Cytoplasmic side of the membrane; sequence GF. The chain crosses the membrane as a helical span at residues 222–242; sequence LVDFLSHAAIVGFMGGAAIVI. Residues 243–278 lie on the Extracellular side of the membrane; sequence GLQQLKGLLGITNFTTNTDIVSVLRAVWRSCQQQWS. The N-linked (GlcNAc...) asparagine glycan is linked to Asn-255. Residues 279–299 traverse the membrane as a helical segment; sequence PHTFILGCSFLSFILITRFIG. At 300–304 the chain is on the cytoplasmic side; sequence KKYKK. A helical membrane pass occupies residues 305–325; the sequence is LFWLPAIAPLIAVVVSTLMVF. At 326–360 the chain is on the extracellular side; that stretch reads LTKADEHGVKTVRHIKGGLNPMSIQDLDFNTPHLG. The chain crosses the membrane as a helical span at residues 361–381; it reads QIAKIGLIIAIVALTEAIAVG. The Cytoplasmic portion of the chain corresponds to 382–397; the sequence is RSFAGIKGYRLDGNKE. Residues 398 to 418 form a helical membrane-spanning segment; sequence MVAIGFMNVLGSFTSCYAATG. At 419–426 the chain is on the extracellular side; sequence SFSRTAVN. A helical transmembrane segment spans residues 427–447; it reads FAAGCETAMSNIVMAVTVFVA. Residues 448-454 are Cytoplasmic-facing; sequence LECLTRL. Residues 455 to 475 traverse the membrane as a helical segment; that stretch reads LYYTPIAILASIILSALPGLI. Residues 476–490 lie on the Extracellular side of the membrane; that stretch reads NINEAIHIWKVDKFD. The helical transmembrane segment at 491–511 threads the bilayer; sequence FLALIGAFFGVLFASVEIGLL. Over 512 to 677 the chain is Cytoplasmic; sequence VAVVISFAKI…ALDACFGLKV (166 aa). Residues 548 to 672 form the STAS domain; that stretch reads YPMTVKTPGV…LTIGEALDAC (125 aa).

It belongs to the SLC26A/SulP transporter (TC 2.A.53) family. As to expression, expressed in root cap, central cylinder of roots and in vascular tissues of leaves.

It is found in the membrane. In terms of biological role, low-affinity H(+)/sulfate cotransporter that may be involved in root-to-shoot translocation of sulfate. Plays a central role in the regulation of sulfate assimilation. In Arabidopsis thaliana (Mouse-ear cress), this protein is Sulfate transporter 2.1 (SULTR2;1).